The following is a 154-amino-acid chain: uncharacterized protein (154 aa).

This is an uncharacterized protein from Saccharomyces cerevisiae (strain ATCC 204508 / S288c) (Baker's yeast).